Here is a 513-residue protein sequence, read N- to C-terminus: Putative zinc finger CCCH domain-containing protein 51 (513 aa).

The interval 155–180 is disordered; that stretch reads SMPRNSPNAGRNLVGHPHSSSKSSSK. The segment covering 170–180 has biased composition (low complexity); that stretch reads HPHSSSKSSSK. Residues 176–204 form a C3H1-type zinc finger; it reads KSSSKPCHFHFFRGYCKKGVNCQFFHGSV. In terms of domain architecture, HTH OST-type spans 218-299; the sequence is SLSKLDMEIR…HGQYHVVLVE (82 aa). The RRM domain maps to 325 to 411; the sequence is NQIYMTFPVH…SELRMTWLKS (87 aa).

This Oryza sativa subsp. japonica (Rice) protein is Putative zinc finger CCCH domain-containing protein 51.